We begin with the raw amino-acid sequence, 490 residues long: Betaine aldehyde dehydrogenase (490 aa).

K(+) contacts are provided by Ser-26, Ile-27, and Asp-93. Residue 150–152 (GAW) coordinates NAD(+). Lys-162 serves as the catalytic Charge relay system. NAD(+) is bound by residues 176–179 (KPSE) and 230–233 (GVET). Position 246 (Leu-246) interacts with K(+). Catalysis depends on Glu-252, which acts as the Proton acceptor. 3 residues coordinate NAD(+): Gly-254, Cys-286, and Glu-387. The active-site Nucleophile is Cys-286. Position 286 is a cysteine sulfenic acid (-SOH) (Cys-286). Residues Lys-457 and Gly-460 each contribute to the K(+) site. The active-site Charge relay system is Glu-464.

It belongs to the aldehyde dehydrogenase family. Dimer of dimers. Requires K(+) as cofactor.

It carries out the reaction betaine aldehyde + NAD(+) + H2O = glycine betaine + NADH + 2 H(+). The protein operates within amine and polyamine biosynthesis; betaine biosynthesis via choline pathway; betaine from betaine aldehyde: step 1/1. Its function is as follows. Involved in the biosynthesis of the osmoprotectant glycine betaine. Catalyzes the irreversible oxidation of betaine aldehyde to the corresponding acid. This chain is Betaine aldehyde dehydrogenase, found in Acinetobacter baumannii (strain AB307-0294).